The following is a 288-amino-acid chain: Phenazine biosynthesis-like domain-containing protein 2 (288 aa).

Residue glutamate 46 is part of the active site.

Belongs to the PhzF family.

This is Phenazine biosynthesis-like domain-containing protein 2 (Pbld2) from Mus musculus (Mouse).